Here is a 479-residue protein sequence, read N- to C-terminus: Bifunctional AAC/APH (479 aa).

Positions 8-180 (ICIRTLIDDD…DCYLMEYRYD (173 aa)) constitute an N-acetyltransferase domain. Residues 110-153 (KGIGTRYIKLIFEFLKKERNANAVILDPHKNNPRAIRAYQKSGF) are acetyl-CoA binding site. Residue aspartate 374 is the Proton acceptor; for phosphotransferase activity of the active site. Aspartate 393 contributes to the a gentamycin binding site.

In the C-terminal section; belongs to the aminoglycoside phosphotransferase family.

The protein resides in the cytoplasm. It catalyses the reaction a gentamycin + GTP = a gentamycin 2''-phosphate + GDP + H(+). Functionally, involved in resistance to gentamicin, tobramycin, and kanamycin. Tobramycin and kanamycin resistance is due to the ACC activity, specified by N-terminal region. The C-terminal region is a kinase that phosphorylates several 4,6-disubstituted aminoglycosides. The sequence is that of Bifunctional AAC/APH (aacA-aphD) from Enterococcus faecalis (strain ATCC 700802 / V583).